We begin with the raw amino-acid sequence, 2629 residues long: Telomerase protein component 1 (2629 aa).

TEP1 N-terminal repeat units follow at residues 1–30, 31–60, 61–90, and 91–120; these read MEKL…DLQP, LEKI…DLQP, TERI…DLQP, and LEKL…TVKS. One can recognise a TROVE domain in the interval 227 to 685; that stretch reads LKLTSGDSGF…VKHNLSPMPG (459 aa). Basic residues predominate over residues 386–397; that stretch reads PRKHRSKRRSRQ. The disordered stretch occupies residues 386-412; the sequence is PRKHRSKRRSRQPPRPQKTERPFSERG. Positions 402–412 are enriched in basic and acidic residues; the sequence is QKTERPFSERG. One can recognise an NACHT domain in the interval 1171-1578; sequence RLSLVTGQAG…EFLTNLHVVA (408 aa). An ATP-binding site is contributed by 1177–1184; that stretch reads GQAGQGKT. WD repeat units lie at residues 1420–1462, 1681–1720, 1723–1761, 1764–1803, 1805–1844, 1847–1886, 1889–1930, 1932–1971, 1974–2013, 2015–2054, 2067–2106, 2113–2151, 2154–2191, 2193–2241, 2244–2282, 2285–2324, 2326–2362, 2375–2424, 2467–2507, 2555–2592, and 2594–2628; these read VLPQ…EVLA, TMSS…EEKA, SGCD…WVFQ, AHQY…LAFQ, THPK…VTKE, APGP…RLAA, AQCG…GCLG, LPLS…QGPQ, ELNV…HSLW, LSRY…QPHV, GHEG…APLL, CHRD…QLGQ, GHQS…LTSI, AHSG…QIRT, GHSG…DDSY, RSSV…ATAQ, PGRV…GSTS, EDWG…SSIL, PNGS…GEWI, IHLG…LLGL, and RCEG…FLSW.

In terms of assembly, associated component of the telomerase holoenzyme complex. Component of the vault ribonucleoprotein particle, at least composed of MVP, PARP4 and one or more vault RNAs (vRNAs). Binds to VAULTRC1, VAULTRC2 and VAULTRC4/hvg4 vRNAs. In terms of tissue distribution, ubiquitous.

The protein resides in the nucleus. The protein localises to the chromosome. It is found in the telomere. Functionally, component of the telomerase ribonucleoprotein complex that is essential for the replication of chromosome termini. Also a component of the ribonucleoprotein vaults particle, a multi-subunit structure involved in nucleo-cytoplasmic transport. Responsible for the localizing and stabilizing vault RNA (vRNA) association in the vault ribonucleoprotein particle. This is Telomerase protein component 1 (Tep1) from Mus musculus (Mouse).